We begin with the raw amino-acid sequence, 586 residues long: DNA-binding protein RFX8 (586 aa).

Residues 22–97 (VIQWLVDNFC…YHYDGICIKK (76 aa)) constitute a DNA-binding region (RFX-type winged-helix).

Belongs to the RFX family.

The protein resides in the nucleus. May be a transcription factor. In Homo sapiens (Human), this protein is DNA-binding protein RFX8 (RFX8).